An 88-amino-acid chain; its full sequence is Apolipoprotein C-I (88 aa).

The first 26 residues, 1–26 (MRLILSLPVLAVVLAMVLEGPAPAQA), serve as a signal peptide directing secretion.

It belongs to the apolipoprotein C1 family.

It is found in the secreted. Its function is as follows. Inhibitor of lipoprotein binding to the low density lipoprotein (LDL) receptor, LDL receptor-related protein, and very low density lipoprotein (VLDL) receptor. Associates with high density lipoproteins (HDL) and the triacylglycerol-rich lipoproteins in the plasma and makes up about 10% of the protein of the VLDL and 2% of that of HDL. Appears to interfere directly with fatty acid uptake and is also the major plasma inhibitor of cholesteryl ester transfer protein (CETP). Binds free fatty acids and reduces their intracellular esterification. Modulates the interaction of APOE with beta-migrating VLDL and inhibits binding of beta-VLDL to the LDL receptor-related protein. This is Apolipoprotein C-I (APOC1) from Cynopterus brachyotis (Lesser short-nosed fruit bat).